The following is a 198-amino-acid chain: Large ribosomal subunit protein bL12m (198 aa).

A mitochondrion-targeting transit peptide spans Met1 to Leu36. The segment covering Gly106–Glu115 has biased composition (low complexity). A disordered region spans residues Gly106–Glu126. An N6-acetyllysine mark is found at Lys125, Lys138, Lys142, and Lys144. Lys150 is modified (N6-acetyllysine; alternate). Lys150 bears the N6-succinyllysine; alternate mark. Residue Lys150 forms a Glycyl lysine isopeptide (Lys-Gly) (interchain with G-Cter in ubiquitin) linkage. At Lys162 the chain carries N6-succinyllysine. 2 positions are modified to N6-acetyllysine: Lys163 and Lys173. Lys178 carries the N6-acetyllysine; alternate modification. Position 178 is an N6-succinyllysine; alternate (Lys178). The residue at position 185 (Lys185) is an N6-acetyllysine.

This sequence belongs to the bacterial ribosomal protein bL12 family. As to quaternary structure, component of the mitochondrial ribosome large subunit (39S) which comprises a 16S rRNA and about 50 distinct proteins. Interacts with NOA1. Two mature forms are produced by differential two-step proteolytic cleavage. Cleaved by the mitochondrial processing protease to produce the long mature form and subsequently by the mitochondrial intermediate protease to produce the short mature form. Post-translationally, in the presence of CUL3, undergoes 'Lys-63'-linked ubiquitination at Lys-150 which results in proteasomal degradation.

The protein localises to the mitochondrion matrix. In terms of biological role, as a component of the mitochondrial large ribosomal subunit, plays a role in mitochondrial translation. When present in mitochondria as a free protein not associated with the ribosome, associates with mitochondrial RNA polymerase POLRMT to activate transcription. Required for POLRMT stability. This Bos taurus (Bovine) protein is Large ribosomal subunit protein bL12m (MRPL12).